The sequence spans 658 residues: UvrABC system protein B (658 aa).

In terms of domain architecture, Helicase ATP-binding spans 25–416 (QFIHNGAQYS…QEHIAEQIIR (392 aa)). 38–45 (GVTGSGKT) provides a ligand contact to ATP. A Beta-hairpin motif is present at residues 91–114 (HFDYYQPEAYIPRRDLFIEKDSSI). In terms of domain architecture, Helicase C-terminal spans 433-607 (AVLDLYDEIK…ELKIESSGLS (175 aa)). The region spanning 623–658 (ESIIKELNIKMHQAAKALEFEEAARLRDEIARIRTM) is the UVR domain.

It belongs to the UvrB family. In terms of assembly, forms a heterotetramer with UvrA during the search for lesions. Interacts with UvrC in an incision complex.

The protein localises to the cytoplasm. The UvrABC repair system catalyzes the recognition and processing of DNA lesions. A damage recognition complex composed of 2 UvrA and 2 UvrB subunits scans DNA for abnormalities. Upon binding of the UvrA(2)B(2) complex to a putative damaged site, the DNA wraps around one UvrB monomer. DNA wrap is dependent on ATP binding by UvrB and probably causes local melting of the DNA helix, facilitating insertion of UvrB beta-hairpin between the DNA strands. Then UvrB probes one DNA strand for the presence of a lesion. If a lesion is found the UvrA subunits dissociate and the UvrB-DNA preincision complex is formed. This complex is subsequently bound by UvrC and the second UvrB is released. If no lesion is found, the DNA wraps around the other UvrB subunit that will check the other stand for damage. The polypeptide is UvrABC system protein B (Helicobacter hepaticus (strain ATCC 51449 / 3B1)).